The sequence spans 182 residues: SAGA-associated factor 11 homolog (182 aa).

The segment at 61–84 (GSGAAVEGEPEDSKPYTIVDQPDT) is disordered. The segment at 98–119 (CHCPNCNRIVAASRFAPHLEKC) adopts an SGF11-type zinc-finger fold. The tract at residues 133–182 (RIANTRDVGTGNYFGGDEDDEDDADWSGEKRKKKISQVRTNGSKKNGKTS) is disordered. The segment covering 148-158 (GDEDDEDDADW) has biased composition (acidic residues).

Belongs to the SGF11 family. In terms of assembly, component of some SAGA transcription coactivator-HAT complexes. Within the SAGA complex, participates in a subcomplex of SAGA called the DUB module (deubiquitination module).

The protein resides in the nucleus. In terms of biological role, component of the transcription regulatory histone acetylation (HAT) complex SAGA, a multiprotein complex that activates transcription by remodeling chromatin and mediating histone acetylation and deubiquitination. Within the SAGA complex, participates in a subcomplex that specifically deubiquitinates histone H2B. The SAGA complex is recruited to specific gene promoters by activators, where it is required for transcription. In Anopheles gambiae (African malaria mosquito), this protein is SAGA-associated factor 11 homolog.